The primary structure comprises 307 residues: Oxygen-dependent coproporphyrinogen-III oxidase (307 aa).

S99 is a binding site for substrate. 2 residues coordinate a divalent metal cation: H103 and H113. H113 (proton donor) is an active-site residue. A substrate-binding site is contributed by 115-117 (NVR). Residues H152 and H182 each coordinate a divalent metal cation. The important for dimerization stretch occupies residues 247 to 282 (YVEFNLVFDRGTLFGLQSGGRTESILMSMPPVANWR). Position 265–267 (265–267 (GGR)) interacts with substrate.

It belongs to the aerobic coproporphyrinogen-III oxidase family. As to quaternary structure, homodimer. Requires a divalent metal cation as cofactor.

The protein resides in the cytoplasm. The catalysed reaction is coproporphyrinogen III + O2 + 2 H(+) = protoporphyrinogen IX + 2 CO2 + 2 H2O. Its pathway is porphyrin-containing compound metabolism; protoporphyrin-IX biosynthesis; protoporphyrinogen-IX from coproporphyrinogen-III (O2 route): step 1/1. Its function is as follows. Involved in the heme biosynthesis. Catalyzes the aerobic oxidative decarboxylation of propionate groups of rings A and B of coproporphyrinogen-III to yield the vinyl groups in protoporphyrinogen-IX. This is Oxygen-dependent coproporphyrinogen-III oxidase from Burkholderia orbicola (strain MC0-3).